The chain runs to 287 residues: tRNA pseudouridine synthase B (287 aa).

Asp-38 (nucleophile) is an active-site residue.

The protein belongs to the pseudouridine synthase TruB family. Type 1 subfamily.

The catalysed reaction is uridine(55) in tRNA = pseudouridine(55) in tRNA. Functionally, responsible for synthesis of pseudouridine from uracil-55 in the psi GC loop of transfer RNAs. The sequence is that of tRNA pseudouridine synthase B from Mycoplasma mobile (strain ATCC 43663 / 163K / NCTC 11711) (Mesomycoplasma mobile).